The primary structure comprises 165 residues: 3-hydroxyacyl-[acyl-carrier-protein] dehydratase FabZ (165 aa).

The active site involves His64.

The protein belongs to the thioester dehydratase family. FabZ subfamily.

The protein resides in the cytoplasm. It catalyses the reaction a (3R)-hydroxyacyl-[ACP] = a (2E)-enoyl-[ACP] + H2O. Functionally, involved in unsaturated fatty acids biosynthesis. Catalyzes the dehydration of short chain beta-hydroxyacyl-ACPs and long chain saturated and unsaturated beta-hydroxyacyl-ACPs. The polypeptide is 3-hydroxyacyl-[acyl-carrier-protein] dehydratase FabZ (Acidiphilium cryptum (strain JF-5)).